Reading from the N-terminus, the 715-residue chain is Methionine--tRNA ligase (715 aa).

The 'HIGH' region motif lies at 17–27 (PYANGPIHLGH). The Zn(2+) site is built by Cys-148, Cys-151, Cys-161, and Cys-164. A 'KMSKS' region motif is present at residues 359 to 363 (KMSKS). Lys-362 is an ATP binding site. In terms of domain architecture, tRNA-binding spans 614 to 715 (DLSKVELRVG…KDAKPGDRLK (102 aa)).

The protein belongs to the class-I aminoacyl-tRNA synthetase family. MetG type 1 subfamily. Homodimer. Zn(2+) serves as cofactor.

Its subcellular location is the cytoplasm. The catalysed reaction is tRNA(Met) + L-methionine + ATP = L-methionyl-tRNA(Met) + AMP + diphosphate. In terms of biological role, is required not only for elongation of protein synthesis but also for the initiation of all mRNA translation through initiator tRNA(fMet) aminoacylation. The protein is Methionine--tRNA ligase of Leptospira interrogans serogroup Icterohaemorrhagiae serovar Lai (strain 56601).